Here is a 2111-residue protein sequence, read N- to C-terminus: Mycocerosic acid synthase-like polyketide synthase (2111 aa).

An N-terminal signal peptide occupies residues 1 to 15; sequence MTQNCVAPVAIIGMA. Cys16 is lipidated: N-palmitoyl cysteine. A lipid anchor (S-diacylglycerol cysteine) is attached at Cys16. In terms of domain architecture, Ketosynthase family 3 (KS3) spans 16–428; sequence CRLPGAINSP…GTNVHAVLEQ (413 aa). Cys178 functions as the Acyl-thioester intermediate; for beta-ketoacyl synthase activity in the catalytic mechanism. Catalysis depends on for beta-ketoacyl synthase activity residues His313 and His349. The linker domain (LD) stretch occupies residues 430–537; that stretch reads PESPAETAAE…MPQQAVTNDD (108 aa). The interval 538 to 837 is acyltransferase (AT); sequence RGPVWVFSGQ…LAVFAAMRRQ (300 aa). The active-site Acyl-ester intermediate; for acyltransferase activity is Ser629. The tract at residues 896 to 1176 is dehydratase (DH); it reads PSVSVHPLLG…LSAMGLQLGT (281 aa). An N-terminal hotdog fold region spans residues 901–1025; sequence HPLLGSHVVL…GDVDAERPAA (125 aa). One can recognise a PKS/mFAS DH domain in the interval 901–1183; sequence HPLLGSHVVL…LGTGNSDKAE (283 aa). The Proton acceptor; for dehydratase activity role is filled by His934. The segment at 1036 to 1183 is C-terminal hotdog fold; it reads PNRVDGDELR…LGTGNSDKAE (148 aa). Asp1100 acts as the Proton donor; for dehydratase activity in catalysis. Positions 1215-1391 are pseudo beta-ketoacyl reductase (PsiKR); the sequence is SWLVILAGDD…SPEDETAWRD (177 aa). Residues 1419–1743 form an enoylreductase (ER) region; that stretch reads EGMRLVVRNP…QHTGKLVIDI (325 aa). The interval 1765 to 2008 is beta-ketoacyl reductase (KR); that stretch reads GAYVITGGLG…RSPFAELFLA (244 aa). NADP(+) is bound by residues 1773–1776, 1796–1799, 1824–1825, and 1902–1903; these read LGGL, SRSA, DI, and FS. One can recognise a Carrier domain in the interval 2029-2104; the sequence is EEWPTHLRRL…QRLCEMLDTD (76 aa). O-(pantetheine 4'-phosphoryl)serine is present on Ser2064.

As to quaternary structure, homodimer.

It is found in the cell membrane. Its pathway is lipid metabolism; fatty acid biosynthesis. Functionally, polyketide synthase involved in the biosynthesis of 2,4-dimethyl-2-eicosenoic acid, a lipid component of the lipooligosaccharides (LOS) which are not located at the bacterial surface but rather in deeper compartments of the cell envelope of M.smegmatis. This chain is Mycocerosic acid synthase-like polyketide synthase, found in Mycolicibacterium smegmatis (strain ATCC 700084 / mc(2)155) (Mycobacterium smegmatis).